The primary structure comprises 215 residues: Ribonuclease HII (215 aa).

Residues 24–215 (GVVFGVDEVG…PIRQFYENVD (192 aa)) form the RNase H type-2 domain. Residues Asp-30, Glu-31, and Asp-125 each contribute to the a divalent metal cation site.

It belongs to the RNase HII family. Mn(2+) is required as a cofactor. The cofactor is Mg(2+).

The protein localises to the cytoplasm. The catalysed reaction is Endonucleolytic cleavage to 5'-phosphomonoester.. Functionally, endonuclease that specifically degrades the RNA of RNA-DNA hybrids. The protein is Ribonuclease HII of Zymomonas mobilis subsp. mobilis (strain ATCC 31821 / ZM4 / CP4).